Consider the following 297-residue polypeptide: Large ribosomal subunit protein uL15m (297 aa).

The N-terminal 21 residues, 1–21 (MSGNGVHGVHGALQLLRSLPK), are a transit peptide targeting the mitochondrion. Residues 23 to 69 (SLANLRPNPGSKKPERRRGRGRYRGRKCGRGHKGERQRGNRPRLGFE) are disordered. Over residues 36 to 53 (PERRRGRGRYRGRKCGRG) the composition is skewed to basic residues.

The protein belongs to the universal ribosomal protein uL15 family. In terms of assembly, component of the mitochondrial ribosome large subunit (39S) which comprises a 16S rRNA and about 50 distinct proteins.

It localises to the mitochondrion. In Gallus gallus (Chicken), this protein is Large ribosomal subunit protein uL15m (MRPL15).